A 368-amino-acid chain; its full sequence is Protein-glutamate methylesterase/protein-glutamine glutaminase 2 (368 aa).

One can recognise a Response regulatory domain in the interval Lys6–Glu123. Asp57 bears the 4-aspartylphosphate mark. In terms of domain architecture, CheB-type methylesterase spans Ile169–Leu355. Active-site residues include Ser181, His207, and Asp303.

The protein belongs to the CheB family. In terms of processing, phosphorylated by CheA. Phosphorylation of the N-terminal regulatory domain activates the methylesterase activity.

It is found in the cytoplasm. It carries out the reaction [protein]-L-glutamate 5-O-methyl ester + H2O = L-glutamyl-[protein] + methanol + H(+). The catalysed reaction is L-glutaminyl-[protein] + H2O = L-glutamyl-[protein] + NH4(+). Its function is as follows. Involved in chemotaxis. Part of a chemotaxis signal transduction system that modulates chemotaxis in response to various stimuli. Catalyzes the demethylation of specific methylglutamate residues introduced into the chemoreceptors (methyl-accepting chemotaxis proteins or MCP) by CheR. Also mediates the irreversible deamidation of specific glutamine residues to glutamic acid. This Hahella chejuensis (strain KCTC 2396) protein is Protein-glutamate methylesterase/protein-glutamine glutaminase 2.